Here is a 306-residue protein sequence, read N- to C-terminus: Reaction center protein M chain (306 aa).

Transmembrane regions (helical) follow at residues Gly-53–Asn-79, Gly-111–Lys-140, and Thr-143–Gly-168. Residues His-181 and His-201 each coordinate (7R,8Z)-bacteriochlorophyll b. The chain crosses the membrane as a helical span at residues Asn-198 to Ser-226. Residues His-218 and Glu-233 each coordinate Fe cation. Trp-251 provides a ligand contact to a ubiquinone. Residues Thr-260–Thr-286 form a helical membrane-spanning segment. Residue His-265 coordinates Fe cation.

This sequence belongs to the reaction center PufL/M/PsbA/D family. As to quaternary structure, reaction center is composed of four bacteriochlorophylls, two bacteriopheophytins, two ubiquinones, one iron, and three highly hydrophobic polypeptide chains (designated L, M, and H).

It is found in the cellular chromatophore membrane. Its function is as follows. The reaction center is a membrane-bound complex that mediates the initial photochemical event in the electron transfer process of photosynthesis. This chain is Reaction center protein M chain (pufM), found in Rhodospirillum rubrum.